The primary structure comprises 244 residues: Adenosylcobinamide-GDP ribazoletransferase (244 aa).

The next 5 membrane-spanning stretches (helical) occupy residues 31 to 51 (LLFY…ASHL), 55 to 75 (APAP…SGAL), 109 to 129 (IAVV…WVLV), 134 to 154 (GGWL…LFMG), and 188 to 208 (VVLG…VFLW).

It belongs to the CobS family. Mg(2+) is required as a cofactor.

It localises to the cell inner membrane. The catalysed reaction is alpha-ribazole + adenosylcob(III)inamide-GDP = adenosylcob(III)alamin + GMP + H(+). The enzyme catalyses alpha-ribazole 5'-phosphate + adenosylcob(III)inamide-GDP = adenosylcob(III)alamin 5'-phosphate + GMP + H(+). Its pathway is cofactor biosynthesis; adenosylcobalamin biosynthesis; adenosylcobalamin from cob(II)yrinate a,c-diamide: step 7/7. Its function is as follows. Joins adenosylcobinamide-GDP and alpha-ribazole to generate adenosylcobalamin (Ado-cobalamin). Also synthesizes adenosylcobalamin 5'-phosphate from adenosylcobinamide-GDP and alpha-ribazole 5'-phosphate. This Pseudomonas entomophila (strain L48) protein is Adenosylcobinamide-GDP ribazoletransferase.